We begin with the raw amino-acid sequence, 279 residues long: Movement protein (279 aa).

The disordered stretch occupies residues 246-279; sequence SESEELNVESPPAAIGSSSASRSEAFRPQVVNGL. Residues 254-268 show a composition bias toward low complexity; it reads ESPPAAIGSSSASRS.

Belongs to the cucumovirus movement protein family.

It is found in the host cell junction. Its subcellular location is the host plasmodesma. Transports viral genome to neighboring plant cells directly through plasmosdesmata, without any budding. The movement protein allows efficient cell to cell propagation, by bypassing the host cell wall barrier. Acts by forming a tubular structure at the host plasmodesmata, enlarging it enough to allow free passage of virion capsids. In Cucumber mosaic virus (strain O) (CMV), this protein is Movement protein.